The primary structure comprises 448 residues: Phosphoglucosamine mutase (448 aa).

Residue Ser100 is the Phosphoserine intermediate of the active site. Mg(2+)-binding residues include Ser100, Asp240, Asp242, and Asp244. Ser100 carries the phosphoserine modification.

This sequence belongs to the phosphohexose mutase family. It depends on Mg(2+) as a cofactor. In terms of processing, activated by phosphorylation.

The catalysed reaction is alpha-D-glucosamine 1-phosphate = D-glucosamine 6-phosphate. Catalyzes the conversion of glucosamine-6-phosphate to glucosamine-1-phosphate. This chain is Phosphoglucosamine mutase, found in Bacillus mycoides (strain KBAB4) (Bacillus weihenstephanensis).